The primary structure comprises 171 residues: MTRLHAFNREQLLASARGELFGAAAGRLPNDPMLMFDRITEIREDGGPHGKGMVRAELDIRPDLWFFGCHFIGDPVMPGCLGLDAMWQLTGFFLTWLGAPGKGRALGCGEVKFTGQVLPDAKLVRYEIDISRVINRKLVMAQSDARMYVDDREIYSARDLRVGLFTETGSF.

The active site involves H70.

The protein belongs to the thioester dehydratase family. FabA subfamily. Homodimer.

The protein localises to the cytoplasm. It carries out the reaction a (3R)-hydroxyacyl-[ACP] = a (2E)-enoyl-[ACP] + H2O. It catalyses the reaction (3R)-hydroxydecanoyl-[ACP] = (2E)-decenoyl-[ACP] + H2O. The enzyme catalyses (2E)-decenoyl-[ACP] = (3Z)-decenoyl-[ACP]. Its pathway is lipid metabolism; fatty acid biosynthesis. Functionally, necessary for the introduction of cis unsaturation into fatty acids. Catalyzes the dehydration of (3R)-3-hydroxydecanoyl-ACP to E-(2)-decenoyl-ACP and then its isomerization to Z-(3)-decenoyl-ACP. Can catalyze the dehydratase reaction for beta-hydroxyacyl-ACPs with saturated chain lengths up to 16:0, being most active on intermediate chain length. This Stenotrophomonas maltophilia (strain R551-3) protein is 3-hydroxydecanoyl-[acyl-carrier-protein] dehydratase.